Here is a 122-residue protein sequence, read N- to C-terminus: uncharacterized protein (122 aa).

Helical transmembrane passes span 9 to 29 and 60 to 80; these read VATV…STWV and LFSF…CLIM.

Its subcellular location is the cytoplasm. It localises to the membrane. This is an uncharacterized protein from Schizosaccharomyces pombe (strain 972 / ATCC 24843) (Fission yeast).